We begin with the raw amino-acid sequence, 505 residues long: Probable ribonuclease FAU-1 (505 aa).

The interval 389-408 is disordered; that stretch reads ISGHGSGTYDELGTPRESGD.

It belongs to the FAU-1 family.

In terms of biological role, probable RNase involved in rRNA stability through maturation and/or degradation of precursor rRNAs. Binds to RNA in loop regions with AU-rich sequences. This Haloquadratum walsbyi (strain DSM 16790 / HBSQ001) protein is Probable ribonuclease FAU-1.